A 734-amino-acid chain; its full sequence is Photosystem I P700 chlorophyll a apoprotein A2 (734 aa).

The next 8 membrane-spanning stretches (helical) occupy residues 46 to 69 (IFASHFGQLAIIFLWTSGNLFHVA), 135 to 158 (LYTGALFLLFLSAISLIAGWLHLQ), 175 to 199 (LNHHLSGLFGVSSLAWTGHLVHVAI), 273 to 291 (IAHHHLAIAFIFLVAGHMY), 330 to 353 (LHFQLGLALASLGVITSLVAQHMY), 369 to 395 (AALYTHHQYIAGFIMTGAFAHGAIFFI), 417 to 439 (AIISHLSWASLFLGFHTLGLYVH), and 517 to 535 (FLVHHAIALGLHTTTLILV). [4Fe-4S] cluster is bound by residues cysteine 559 and cysteine 568. 2 helical membrane-spanning segments follow: residues 575–596 (AFYLAVFWMLNTIGWVTFYWHW) and 643–665 (LSVWAWMFLFGHLVWATGFMFLI). Chlorophyll a-binding residues include histidine 654, methionine 662, and tyrosine 670. Residue tryptophan 671 coordinates phylloquinone. The helical transmembrane segment at 707–727 (LVGLAHFSVGYIFTYAAFLIA) threads the bilayer.

This sequence belongs to the PsaA/PsaB family. In terms of assembly, the PsaA/B heterodimer binds the P700 chlorophyll special pair and subsequent electron acceptors. PSI consists of a core antenna complex that captures photons, and an electron transfer chain that converts photonic excitation into a charge separation. The eukaryotic PSI reaction center is composed of at least 11 subunits. P700 is a chlorophyll a/chlorophyll a' dimer, A0 is one or more chlorophyll a, A1 is one or both phylloquinones and FX is a shared 4Fe-4S iron-sulfur center. is required as a cofactor.

The protein localises to the plastid. It localises to the chloroplast thylakoid membrane. The enzyme catalyses reduced [plastocyanin] + hnu + oxidized [2Fe-2S]-[ferredoxin] = oxidized [plastocyanin] + reduced [2Fe-2S]-[ferredoxin]. Its function is as follows. PsaA and PsaB bind P700, the primary electron donor of photosystem I (PSI), as well as the electron acceptors A0, A1 and FX. PSI is a plastocyanin-ferredoxin oxidoreductase, converting photonic excitation into a charge separation, which transfers an electron from the donor P700 chlorophyll pair to the spectroscopically characterized acceptors A0, A1, FX, FA and FB in turn. Oxidized P700 is reduced on the lumenal side of the thylakoid membrane by plastocyanin. The sequence is that of Photosystem I P700 chlorophyll a apoprotein A2 from Nicotiana tabacum (Common tobacco).